Consider the following 704-residue polypeptide: Ubiquitin-like modifier-activating enzyme atg7 (704 aa).

The GXGXXG motif signature appears at 372-377; that stretch reads GAGTLG. Residue cysteine 555 is the Glycyl thioester intermediate of the active site. The segment at 660-699 is homodimerization; the sequence is ALTEKDYITELSGLAEVQRKAEAAANDVEWDSDEEGMEDE. Residues 682-704 form a disordered region; it reads AAANDVEWDSDEEGMEDEEPELL. The span at 687–704 shows a compositional bias: acidic residues; sequence VEWDSDEEGMEDEEPELL.

This sequence belongs to the ATG7 family. As to quaternary structure, homodimer. Interacts with ATG8 through a thioester bond between Cys-555 and the C-terminal Gly of ATG8 and with ATG12 through a thioester bond between Cys-555 and the C-terminal Gly of ATG12. Also interacts with ATG3.

It is found in the cytoplasm. It localises to the preautophagosomal structure. Its function is as follows. E1-like activating enzyme involved in the 2 ubiquitin-like systems required for cytoplasm to vacuole transport (Cvt) and autophagy. Activates ATG12 for its conjugation with ATG5 and ATG8 for its conjugation with phosphatidylethanolamine. Both systems are needed for the ATG8 association to Cvt vesicles and autophagosomes membranes. Autophagy is essential for maintenance of amino acid levels and protein synthesis under nitrogen starvation. Required for selective autophagic degradation of the nucleus (nucleophagy) as well as for mitophagy which contributes to regulate mitochondrial quantity and quality by eliminating the mitochondria to a basal level to fulfill cellular energy requirements and preventing excess ROS production. Required for normal mycelial growth and conidiogenesis, and regulates sclerotial formation. Plays an essential role in pathogenesis. The polypeptide is Ubiquitin-like modifier-activating enzyme atg7 (Botryotinia fuckeliana (strain T4) (Noble rot fungus)).